The following is a 353-amino-acid chain: Serine proteinase inhibitor 1 (353 aa).

The protein belongs to the serpin family. Poxviruses subfamily.

Its subcellular location is the host cytoplasm. Functionally, plays a role in mediating viral host range. May act to inhibit a caspase independent form of apoptosis to allow efficient virus replication in infected cells. The protein is Serine proteinase inhibitor 1 (OPG208) of Vaccinia virus (strain Western Reserve) (VACV).